Reading from the N-terminus, the 155-residue chain is Ribosomal RNA large subunit methyltransferase H (155 aa).

Residues Leu72, Gly103, and 122-127 each bind S-adenosyl-L-methionine; that span reads LSTLTL.

This sequence belongs to the RNA methyltransferase RlmH family. In terms of assembly, homodimer.

The protein resides in the cytoplasm. The catalysed reaction is pseudouridine(1915) in 23S rRNA + S-adenosyl-L-methionine = N(3)-methylpseudouridine(1915) in 23S rRNA + S-adenosyl-L-homocysteine + H(+). Specifically methylates the pseudouridine at position 1915 (m3Psi1915) in 23S rRNA. This is Ribosomal RNA large subunit methyltransferase H from Klebsiella pneumoniae (strain 342).